Consider the following 1008-residue polypeptide: Collagen alpha-2(I) chain (1008 aa).

The tract at residues 1–999 (GGFDFSFLPQ…IRGSGGGYDF (999 aa)) is disordered. 4 positions are modified to 4-hydroxyproline: P9, P12, P45, and P51. Positions 38-81 (LMGPRGPPGASGAPGPQGFPAGEPGEPGQTGPAGARGPAGPPGK) are enriched in low complexity. Basic and acidic residues predominate over residues 82–94 (ADGHPGKPGRPGE). 5-hydroxylysine; alternate is present on K116. O-linked (Gal...) hydroxylysine; alternate glycosylation is present at K116. Composition is skewed to low complexity over residues 164–193 (VGAP…SAGP), 239–260 (PGAN…AGAP), and 301–314 (EPGS…PGSS). Over residues 336-345 (GLRGGPGSRG) the composition is skewed to gly residues. Positions 358–374 (PAGARGASGPAGVRGPS) are enriched in low complexity. 2 positions are modified to 4-hydroxyproline: P380 and P383. A compositionally biased stretch (low complexity) spans 409 to 428 (LPGIDGRPGPIGPAGARGEA). Over residues 455–466 (GNRGQGGKGEQG) the composition is skewed to gly residues. 2 stretches are compositionally biased toward low complexity: residues 513 to 530 (PGES…SRGP) and 542 to 552 (EPGVVGAPGTA). Residues 553-562 (GPAGSGGLPG) are compositionally biased toward gly residues. Composition is skewed to low complexity over residues 582-629 (RGEV…PRGS) and 636-656 (VGPA…QPGA). Over residues 657 to 666 (KGERGTKGPK) the composition is skewed to basic and acidic residues. Over residues 674-684 (PTGPVGSAGPA) the composition is skewed to low complexity. Positions 694–703 (GSRGDGGPPG) are enriched in gly residues. Over residues 704–714 (ATGFPGAAGRT) the composition is skewed to low complexity. Residues 751–760 (GETGAGGPPG) are compositionally biased toward gly residues. 5 stretches are compositionally biased toward low complexity: residues 768 to 795 (SGEP…LGLP), 803 to 813 (LPGVAGAVGEP), 826 to 842 (PPGA…PGNP), 862 to 884 (YAGN…VGPA), and 892 to 907 (EPGP…ALGP). Positions 917–928 (RGDKGEPGDKGP) are enriched in basic and acidic residues. Positions 989–998 (GIRGSGGGYD) are enriched in gly residues.

The protein belongs to the fibrillar collagen family. As to quaternary structure, trimers of one alpha 2(I) and two alpha 1(I) chains. Interacts (via C-terminus) with TMEM131 (via PapD-L domain); the interaction is direct and is involved in assembly and TRAPPIII ER-to-Golgi transport complex-dependent secretion of collagen. Prolines at the third position of the tripeptide repeating unit (G-X-Y) are hydroxylated in some or all of the chains. As to expression, expressed in bones.

It localises to the secreted. Its subcellular location is the extracellular space. It is found in the extracellular matrix. Its function is as follows. Type I collagen is a member of group I collagen (fibrillar forming collagen). This chain is Collagen alpha-2(I) chain, found in Nothrotheriops shastensis (Shasta ground sloth).